The primary structure comprises 534 residues: Glucans biosynthesis protein D (534 aa).

A signal peptide (tat-type signal) is located at residues 1–30; the sequence is MRMQRRHLLKNAAAALAALGLPALPQWALA.

Belongs to the OpgD/OpgG family. In terms of processing, predicted to be exported by the Tat system. The position of the signal peptide cleavage has not been experimentally proven.

The protein localises to the periplasm. Its pathway is glycan metabolism; osmoregulated periplasmic glucan (OPG) biosynthesis. In terms of biological role, probably involved in the control of the structural glucose backbone of osmoregulated periplasmic glucans (OPGs). The chain is Glucans biosynthesis protein D from Xanthomonas oryzae pv. oryzae (strain KACC10331 / KXO85).